A 398-amino-acid polypeptide reads, in one-letter code: Arylacetamide deacetylase (398 aa).

Residues 1–4 (GVKT) are Cytoplasmic-facing. The helical; Signal-anchor for type II membrane protein transmembrane segment at 5-22 (VLLLIVGVLGAYYVYTPL) threads the bilayer. The Lumenal portion of the chain corresponds to 23–398 (PDNIEEPWRL…QYFEWLRENV (376 aa)). Asn-77 is a glycosylation site (N-linked (GlcNAc...) asparagine). The short motif at 110–112 (HGG) is the Involved in the stabilization of the negatively charged intermediate by the formation of the oxyanion hole element. The cysteines at positions 115 and 339 are disulfide-linked. The active site involves Ser-188. Asn-281 is a glycosylation site (N-linked (GlcNAc...) asparagine). Active-site residues include Asp-342 and His-372.

It belongs to the 'GDXG' lipolytic enzyme family. Post-translationally, glycosylated.

It localises to the endoplasmic reticulum membrane. The protein resides in the microsome membrane. It catalyses the reaction a triacylglycerol + H2O = a diacylglycerol + a fatty acid + H(+). With respect to regulation, inhibited by diisopropylphosphofluoridate (DFP). Displays cellular triglyceride lipase activity in liver, increases the levels of intracellular fatty acids derived from the hydrolysis of newly formed triglyceride stores and plays a role in very low-density lipoprotein assembly. Displays serine esterase activity in liver. Deacetylates a variety of arylacetamide substrates, including xenobiotic compounds and procarcinogens, converting them to the primary arylamide compounds and increasing their toxicity. This Oryctolagus cuniculus (Rabbit) protein is Arylacetamide deacetylase.